The sequence spans 315 residues: Lipoyl synthase (315 aa).

[4Fe-4S] cluster is bound by residues Cys63, Cys68, Cys74, Cys89, Cys93, Cys96, and Ser303. One can recognise a Radical SAM core domain in the interval 75 to 292 (FSHGTATFMI…EKKAYDMGFR (218 aa)).

The protein belongs to the radical SAM superfamily. Lipoyl synthase family. The cofactor is [4Fe-4S] cluster.

It is found in the cytoplasm. The enzyme catalyses [[Fe-S] cluster scaffold protein carrying a second [4Fe-4S](2+) cluster] + N(6)-octanoyl-L-lysyl-[protein] + 2 oxidized [2Fe-2S]-[ferredoxin] + 2 S-adenosyl-L-methionine + 4 H(+) = [[Fe-S] cluster scaffold protein] + N(6)-[(R)-dihydrolipoyl]-L-lysyl-[protein] + 4 Fe(3+) + 2 hydrogen sulfide + 2 5'-deoxyadenosine + 2 L-methionine + 2 reduced [2Fe-2S]-[ferredoxin]. It participates in protein modification; protein lipoylation via endogenous pathway; protein N(6)-(lipoyl)lysine from octanoyl-[acyl-carrier-protein]: step 2/2. In terms of biological role, catalyzes the radical-mediated insertion of two sulfur atoms into the C-6 and C-8 positions of the octanoyl moiety bound to the lipoyl domains of lipoate-dependent enzymes, thereby converting the octanoylated domains into lipoylated derivatives. This Laribacter hongkongensis (strain HLHK9) protein is Lipoyl synthase.